Consider the following 537-residue polypeptide: CTP synthase (537 aa).

Positions 1–267 (MTKYIFVTGG…DQIVCDHLKL (267 aa)) are amidoligase domain. Serine 13 is a binding site for CTP. Serine 13 lines the UTP pocket. 14-19 (SIGKGI) contributes to the ATP binding site. Tyrosine 54 lines the L-glutamine pocket. Aspartate 71 lines the ATP pocket. The Mg(2+) site is built by aspartate 71 and glutamate 141. CTP is bound by residues 148–150 (DIE), 188–193 (KTKPTQ), and lysine 224. Residues 188–193 (KTKPTQ) and lysine 224 each bind UTP. 240-242 (RDV) lines the ATP pocket. Residues 292–535 (RIALVGKYVE…VTAAVKNKNQ (244 aa)) enclose the Glutamine amidotransferase type-1 domain. Residue glycine 354 coordinates L-glutamine. Catalysis depends on cysteine 381, which acts as the Nucleophile; for glutamine hydrolysis. Residues 382–385 (LGMQ), glutamate 405, and arginine 463 each bind L-glutamine. Active-site residues include histidine 508 and glutamate 510.

The protein belongs to the CTP synthase family. In terms of assembly, homotetramer.

It carries out the reaction UTP + L-glutamine + ATP + H2O = CTP + L-glutamate + ADP + phosphate + 2 H(+). The catalysed reaction is L-glutamine + H2O = L-glutamate + NH4(+). It catalyses the reaction UTP + NH4(+) + ATP = CTP + ADP + phosphate + 2 H(+). It functions in the pathway pyrimidine metabolism; CTP biosynthesis via de novo pathway; CTP from UDP: step 2/2. Its activity is regulated as follows. Allosterically activated by GTP, when glutamine is the substrate; GTP has no effect on the reaction when ammonia is the substrate. The allosteric effector GTP functions by stabilizing the protein conformation that binds the tetrahedral intermediate(s) formed during glutamine hydrolysis. Inhibited by the product CTP, via allosteric rather than competitive inhibition. Functionally, catalyzes the ATP-dependent amination of UTP to CTP with either L-glutamine or ammonia as the source of nitrogen. Regulates intracellular CTP levels through interactions with the four ribonucleotide triphosphates. The chain is CTP synthase from Streptococcus equi subsp. zooepidemicus (strain H70).